The primary structure comprises 270 residues: NAD(P)H-hydrate epimerase (270 aa).

The region spanning 25-234 (FQQLMDLMQN…DLLAPEAIYQ (210 aa)) is the YjeF N-terminal domain. Position 73-77 (73-77 (DNGGQ)) interacts with (6S)-NADPHX. Positions 74 and 144 each coordinate K(+). (6S)-NADPHX contacts are provided by residues 148–154 (GVGLYGH) and Glu-177. Position 180 (Thr-180) interacts with K(+).

The protein belongs to the NnrE/AIBP family. The cofactor is K(+).

The enzyme catalyses (6R)-NADHX = (6S)-NADHX. The catalysed reaction is (6R)-NADPHX = (6S)-NADPHX. Functionally, catalyzes the epimerization of the S- and R-forms of NAD(P)HX, a damaged form of NAD(P)H that is a result of enzymatic or heat-dependent hydration. This is a prerequisite for the S-specific NAD(P)H-hydrate dehydratase to allow the repair of both epimers of NAD(P)HX. The polypeptide is NAD(P)H-hydrate epimerase (Legionella pneumophila (strain Corby)).